Here is a 112-residue protein sequence, read N- to C-terminus: Tetracenomycin-F1 monooxygenase (112 aa).

Residues Phe-11 to Val-100 enclose the ABM domain.

In terms of assembly, homotrimer.

The catalysed reaction is tetracenomycin F1 + O2 = tetracenomycin D3 + H2O + H(+). Its pathway is antibiotic biosynthesis; tetracenomycin C biosynthesis. Its activity is regulated as follows. Inhibited by p-chloromercuribenzoic acid, N-ethylmaleimide and diethyl pyrocarbonate. Its function is as follows. Oxygenase required for conversion of tetracenomycin F1 to tetracenomycin D3. This chain is Tetracenomycin-F1 monooxygenase (tcmH), found in Streptomyces glaucescens.